The primary structure comprises 328 residues: H-2 class I histocompatibility antigen, K-Q alpha chain (328 aa).

The tract at residues 1 to 71 (PRFISVGYVD…LLRYYNQSAG (71 aa)) is alpha-1. Topologically, residues 1 to 265 (PRFISVGYVD…EPPPSAVSNT (265 aa)) are extracellular. A glycan (N-linked (GlcNAc...) asparagine) is linked at Asn67. The alpha-2 stretch occupies residues 72-163 (GSHTIQRMYG…KNGNATLLRT (92 aa)). Residues Cys82 and Cys145 are joined by a disulfide bond. The N-linked (GlcNAc...) asparagine glycan is linked to Asn157. The alpha-3 stretch occupies residues 164–255 (DSPKAHVTHH…GLPKPLTLRW (92 aa)). The Ig-like C1-type domain occupies 166-252 (PKAHVTHHSR…YHQGLPKPLT (87 aa)). An intrachain disulfide couples Cys184 to Cys240. The interval 256–265 (EPPPSAVSNT) is connecting peptide. Residues 266 to 289 (VIIAVLVVLGAAIVTGAVVAFVMM) form a helical membrane-spanning segment. Residues 290-328 (RRRNTGGKGGDYALAPGSQTSDLSLPDCKVMVHDPHSLA) lie on the Cytoplasmic side of the membrane. Phosphoserine is present on residues Ser310 and Ser313.

Belongs to the MHC class I family. Heterodimer of an alpha chain and a beta chain (beta-2-microglobulin).

Its subcellular location is the membrane. Functionally, involved in the presentation of foreign antigens to the immune system. This chain is H-2 class I histocompatibility antigen, K-Q alpha chain (H2-K1), found in Mus musculus (Mouse).